The following is a 282-amino-acid chain: NADPH-dependent 7-cyano-7-deazaguanine reductase (282 aa).

88–90 contributes to the substrate binding site; the sequence is IES. 90 to 91 lines the NADPH pocket; the sequence is SK. Catalysis depends on Cys-190, which acts as the Thioimide intermediate. The active-site Proton donor is the Asp-197. 229 to 230 contacts substrate; it reads HE. 258 to 259 lines the NADPH pocket; that stretch reads RG.

Belongs to the GTP cyclohydrolase I family. QueF type 2 subfamily. In terms of assembly, homodimer.

It localises to the cytoplasm. It carries out the reaction 7-aminomethyl-7-carbaguanine + 2 NADP(+) = 7-cyano-7-deazaguanine + 2 NADPH + 3 H(+). Its pathway is tRNA modification; tRNA-queuosine biosynthesis. Its function is as follows. Catalyzes the NADPH-dependent reduction of 7-cyano-7-deazaguanine (preQ0) to 7-aminomethyl-7-deazaguanine (preQ1). This chain is NADPH-dependent 7-cyano-7-deazaguanine reductase, found in Shigella flexneri serotype 5b (strain 8401).